Here is a 706-residue protein sequence, read N- to C-terminus: Lysophospholipase 2 (706 aa).

An N-terminal signal peptide occupies residues 1–19; sequence MQLRNILQASSLISGLSLA. In terms of domain architecture, PLA2c spans 36 to 588; sequence PCPSDDTSLV…ADYCWNGTLS (553 aa). 25 N-linked (GlcNAc...) asparagine glycosylation sites follow: asparagine 47, asparagine 80, asparagine 94, asparagine 125, asparagine 162, asparagine 181, asparagine 193, asparagine 217, asparagine 279, asparagine 309, asparagine 365, asparagine 390, asparagine 491, asparagine 515, asparagine 524, asparagine 543, asparagine 567, asparagine 584, asparagine 598, asparagine 630, asparagine 634, asparagine 642, asparagine 648, asparagine 652, and asparagine 658. Residues 627-672 form a disordered region; the sequence is TSGNTTSNSTTSTSSNVTSNSNSSSNTTLNSNSSSSSISSSTARSS. Asparagine 680 is lipidated: GPI-anchor amidated asparagine. A propeptide spans 681–706 (removed in mature form); it reads AAAISYANTNTLMSLLGAITALFGLI.

This sequence belongs to the lysophospholipase family. In terms of processing, the GPI-anchor is attached to the protein in the endoplasmic reticulum and serves to target the protein to the cell surface. There, the glucosamine-inositol phospholipid moiety is cleaved off and the GPI-modified mannoprotein is covalently attached via its lipidless GPI glycan remnant to the 1,6-beta-glucan of the outer cell wall layer.

It is found in the secreted. Its subcellular location is the cell wall. The protein resides in the membrane. The enzyme catalyses a 1-acyl-sn-glycero-3-phosphocholine + H2O = sn-glycerol 3-phosphocholine + a fatty acid + H(+). The catalysed reaction is 1-hexadecanoyl-sn-glycero-3-phosphoethanolamine + H2O = sn-glycero-3-phosphoethanolamine + hexadecanoate + H(+). It catalyses the reaction 1-hexadecanoyl-sn-glycero-3-phosphocholine + H2O = sn-glycerol 3-phosphocholine + hexadecanoate + H(+). It carries out the reaction 1-hexadecanoyl-sn-glycero-3-phospho-L-serine + H2O = sn-glycero-3-phospho-L-serine + hexadecanoate + H(+). The enzyme catalyses 1,2-dihexadecanoyl-sn-glycero-3-phosphocholine + H2O = 1-hexadecanoyl-sn-glycero-3-phosphocholine + hexadecanoate + H(+). Its function is as follows. Sequentially removes both fatty acyl groups from diacylglycerophospholipids and therefore has both phospholipase A and lysophospholipase activities. However, it does not display transacylase activity. Substrate preference is phosphatidylserine &gt; phosphatidylinositol &gt; phosphatidylcholine &gt; phosphatidylethanolamine. The substrate specificity is pH- and ion-dependent. In contrast with activities observed at optimum pH 3.5, the order of substrate preference at pH 5.5 is phosphatidylserine = phosphatidylethanolamine &gt; phosphatidylcholine &gt; phosphatidylinositol. The chain is Lysophospholipase 2 (PLB2) from Saccharomyces cerevisiae (strain ATCC 204508 / S288c) (Baker's yeast).